We begin with the raw amino-acid sequence, 915 residues long: Kinesin-like protein KIN-10A (915 aa).

The span at 1-16 (MAPPTPSPRPGPPPTP) shows a compositional bias: pro residues. Disordered regions lie at residues 1–28 (MAPPTPSPRPGPPPTPQAAMTTPLKTPA) and 34–53 (HFPAMTPRNGGGGGAAAGGT). The region spanning 56–391 (PVEVIGRIRN…LEYGAKAKCI (336 aa)) is the Kinesin motor domain. ATP is bound at residue 137–144 (GPTGSGKS). The stretch at 426-517 (NLQKENKLRE…QRLKEVEREK (92 aa)) forms a coiled coil. A disordered region spans residues 676–718 (PAKKAFGDENNEPAKQTFGDENKQQPAKRVFGDENKDPSAWGA).

This sequence belongs to the TRAFAC class myosin-kinesin ATPase superfamily. Kinesin family. KIN-10 subfamily.

The chain is Kinesin-like protein KIN-10A from Oryza sativa subsp. japonica (Rice).